The following is a 117-amino-acid chain: Immunoglobulin heavy variable 1-84 (117 aa).

Residues 1–19 (MGWSWIFLFLLSGTAGVHC) form the signal peptide. Positions 20–49 (QIQLQQSGPELVKPGASVKISCKASGYTFT) are framework-1. Residues 31 to 117 (VKPGASVKIS…EDSAVYFCAR (87 aa)) enclose the Ig-like domain. Cysteines 41 and 115 form a disulfide. The complementarity-determining-1 stretch occupies residues 50–54 (DYYIN). Residues 55–68 (WVKQRPGQGLEWIG) form a framework-2 region. The complementarity-determining-2 stretch occupies residues 69–85 (WIYPGSGNTKYNEKFKG). The segment at 86–117 (KATLTVDTSSSTAYMQLSSLTSEDSAVYFCAR) is framework-3.

This Mus musculus (Mouse) protein is Immunoglobulin heavy variable 1-84.